Reading from the N-terminus, the 155-residue chain is 6,7-dimethyl-8-ribityllumazine synthase (155 aa).

5-amino-6-(D-ribitylamino)uracil contacts are provided by residues Phe24, 58 to 60 (AFE), and 82 to 84 (AII). 87–88 (ST) is a (2S)-2-hydroxy-3-oxobutyl phosphate binding site. The active-site Proton donor is His90. Phe115 is a 5-amino-6-(D-ribitylamino)uracil binding site. Arg129 serves as a coordination point for (2S)-2-hydroxy-3-oxobutyl phosphate.

It belongs to the DMRL synthase family.

It carries out the reaction (2S)-2-hydroxy-3-oxobutyl phosphate + 5-amino-6-(D-ribitylamino)uracil = 6,7-dimethyl-8-(1-D-ribityl)lumazine + phosphate + 2 H2O + H(+). The protein operates within cofactor biosynthesis; riboflavin biosynthesis; riboflavin from 2-hydroxy-3-oxobutyl phosphate and 5-amino-6-(D-ribitylamino)uracil: step 1/2. In terms of biological role, catalyzes the formation of 6,7-dimethyl-8-ribityllumazine by condensation of 5-amino-6-(D-ribitylamino)uracil with 3,4-dihydroxy-2-butanone 4-phosphate. This is the penultimate step in the biosynthesis of riboflavin. The sequence is that of 6,7-dimethyl-8-ribityllumazine synthase from Chlorobium phaeobacteroides (strain BS1).